We begin with the raw amino-acid sequence, 193 residues long: Pyridoxal 5'-phosphate synthase subunit PdxT (193 aa).

Glycine 52–serine 54 serves as a coordination point for L-glutamine. The active-site Nucleophile is the cysteine 84. L-glutamine is bound by residues arginine 111 and isoleucine 139–arginine 140. Active-site charge relay system residues include histidine 176 and glutamate 178.

Belongs to the glutaminase PdxT/SNO family. In the presence of PdxS, forms a dodecamer of heterodimers. Only shows activity in the heterodimer.

It catalyses the reaction aldehydo-D-ribose 5-phosphate + D-glyceraldehyde 3-phosphate + L-glutamine = pyridoxal 5'-phosphate + L-glutamate + phosphate + 3 H2O + H(+). It carries out the reaction L-glutamine + H2O = L-glutamate + NH4(+). It participates in cofactor biosynthesis; pyridoxal 5'-phosphate biosynthesis. Catalyzes the hydrolysis of glutamine to glutamate and ammonia as part of the biosynthesis of pyridoxal 5'-phosphate. The resulting ammonia molecule is channeled to the active site of PdxS. In Pasteurella multocida (strain Pm70), this protein is Pyridoxal 5'-phosphate synthase subunit PdxT.